We begin with the raw amino-acid sequence, 500 residues long: Galactofuranose transporter ATP-binding protein YtfR (500 aa).

2 ABC transporter domains span residues Leu-10 to Glu-245 and Leu-259 to Ala-497. An ATP-binding site is contributed by Gly-42–Ser-49.

The protein belongs to the ABC transporter superfamily. The complex is composed of two ATP-binding proteins (YtfR), two transmembrane proteins (YtfT and YjfF) and a solute-binding protein (YtfQ).

The protein localises to the cell inner membrane. The catalysed reaction is D-galactofuranose(out) + ATP + H2O = D-galactofuranose(in) + ADP + phosphate + H(+). Its function is as follows. Part of the ABC transporter complex YtfQRT-YjfF involved in galactofuranose transport. Responsible for energy coupling to the transport system. The chain is Galactofuranose transporter ATP-binding protein YtfR (ytfR) from Escherichia coli (strain K12).